A 1299-amino-acid polypeptide reads, in one-letter code: Nuclear factor related to kappa-B-binding protein (1299 aa).

In terms of domain architecture, DEUBAD spans 39–156; that stretch reads PEDLLEDPEI…LKQILASRSD (118 aa). Disordered regions lie at residues 163 to 187 and 204 to 232; these read RSGP…REWR and GDTA…PAVP. Positions 216–232 are enriched in low complexity; the sequence is SSWLPSSPARSPSPAVP. S228 and S298 each carry phosphoserine. Residue K327 forms a Glycyl lysine isopeptide (Lys-Gly) (interchain with G-Cter in SUMO2) linkage. Phosphoserine is present on S351. A winged-helix like domain region spans residues 370–495; that stretch reads LGINEISSSF…FCKQENEDSS (126 aa). A Glycyl lysine isopeptide (Lys-Gly) (interchain with G-Cter in SUMO2) cross-link involves residue K469. K488 is covalently cross-linked (Glycyl lysine isopeptide (Lys-Gly) (interchain with G-Cter in SUMO1); alternate). K488 participates in a covalent cross-link: Glycyl lysine isopeptide (Lys-Gly) (interchain with G-Cter in SUMO2); alternate. Disordered stretches follow at residues 669 to 760, 882 to 902, and 1017 to 1043; these read AAKA…SSSG, LPAT…TSAP, and VHAA…TVVK. Low complexity-rich tracts occupy residues 677-688, 695-715, and 723-733; these read QQKPKPPSKVKS, IKVL…DSSM, and VTPTTPALPAI. A compositionally biased stretch (polar residues) spans 744 to 760; sequence NKSGPSTVSEPAKSSSG. Composition is skewed to low complexity over residues 892–902 and 1019–1043; these read PATSSPGTSAP and AADS…TVVK. Phosphoserine is present on S1022. K1237 is subject to N6-acetyllysine. Residue S1291 is modified to Phosphoserine.

This sequence belongs to the NFRKB family. Component of the chromatin remodeling INO80 complex; specifically part of a complex module associated with the N-terminus of INO80. Interacts with UCHL5; NFRKB competes with ADRM1 for interaction with UCHL5. As to expression, expressed in thymus, brain, testes, spleen and liver.

The protein resides in the nucleus. Its function is as follows. Binds to the DNA consensus sequence 5'-GGGGAATCTCC-3'. Functionally, putative regulatory component of the chromatin remodeling INO80 complex which is involved in transcriptional regulation, DNA replication and probably DNA repair. Modulates the deubiquitinase activity of UCHL5 in the INO80 complex. This is Nuclear factor related to kappa-B-binding protein (NFRKB) from Homo sapiens (Human).